A 224-amino-acid polypeptide reads, in one-letter code: UPF0441 protein ECA0329 (224 aa).

The segment at 180-224 is disordered; it reads TALAPKPATTSTITRGGFGETVAKQNSMQRSSASSNSSSSRSMGG. A compositionally biased stretch (low complexity) spans 204-224; the sequence is QNSMQRSSASSNSSSSRSMGG.

Belongs to the UPF0441 family.

The sequence is that of UPF0441 protein ECA0329 from Pectobacterium atrosepticum (strain SCRI 1043 / ATCC BAA-672) (Erwinia carotovora subsp. atroseptica).